Reading from the N-terminus, the 436-residue chain is Magnesium transporter MRS2-4 (436 aa).

The segment at 1 to 56 (MGKGPLSFRRLSSIRHRKKGSAVKDDSAQTSTPSSPPPPLPIHAGGSAVGATGKAK) is disordered. The span at 12-21 (SSIRHRKKGS) shows a compositional bias: basic residues. Over residues 44 to 53 (AGGSAVGATG) the composition is skewed to low complexity. 2 consecutive transmembrane segments (helical) span residues 372–392 (LTLT…SLFG) and 405–425 (VFGY…MVTL). The short motif at 392–394 (GMN) is the Required for magnesium transport activity element.

It belongs to the CorA metal ion transporter (MIT) (TC 1.A.35.5) family. In terms of tissue distribution, expressed in the whole plant except roots.

The protein localises to the membrane. In terms of biological role, magnesium transporter that may mediate the influx of magnesium. This Arabidopsis thaliana (Mouse-ear cress) protein is Magnesium transporter MRS2-4 (MRS2-4).